Reading from the N-terminus, the 417-residue chain is Phosphoglycerate kinase 1 (417 aa).

Residue Ser2 is modified to N-acetylserine. Phosphoserine is present on residues Ser2 and Ser4. Lys6 is subject to N6-succinyllysine. The residue at position 11 (Lys11) is an N6-acetyllysine. 6 residues coordinate (2R)-3-phosphoglycerate: Val23, Asp24, Phe25, Asn26, Gln38, and Arg39. Positions 38 to 43 (QRIKAA) are mitochondrial targeting region exposed following cis-trans isomerization by PIN1 and recognized by the TOM complex for mitochondrial translocation of the protein. Lys48 carries the N6-acetyllysine; alternate modification. At Lys48 the chain carries N6-succinyllysine; alternate. (2R)-3-phosphoglycerate-binding residues include Ser62, His63, Gly65, and Arg66. Lys75 is subject to N6-acetyllysine. Tyr76 carries the phosphotyrosine modification. An N6-acetyllysine mark is found at Lys86 and Lys91. Lys97 carries the N6-acetyllysine; alternate modification. Lys97 is subject to N6-(2-hydroxyisobutyryl)lysine; alternate. Residues Leu122 and Arg123 each contribute to the (2R)-3-phosphoglycerate site. Lys131 is subject to N6-acetyllysine; alternate. An N6-malonyllysine; alternate modification is found at Lys131. An N6-acetyllysine modification is found at Lys146. 2 residues coordinate (2R)-3-phosphoglycerate: His170 and Arg171. N6-succinyllysine is present on Lys191. Tyr196 carries the phosphotyrosine modification. Residue Lys199 is modified to N6-acetyllysine. Residue Ser203 is modified to Phosphoserine. Position 214 (Gly214) interacts with ADP. Position 214 (Gly214) interacts with CDP. Residues Ala215 and Lys216 each contribute to the AMP site. ATP is bound at residue Ala215. Residue Ala215 participates in Mg(2+) binding. Lys216 is modified (N6-(2-hydroxyisobutyryl)lysine). Residues Ala218 and Asp219 each coordinate Mg(2+). CDP is bound at residue Asp219. Lys220 contributes to the AMP binding site. Lys220 contacts ATP. At Lys220 the chain carries N6-(2-hydroxyisobutyryl)lysine. Gly238 contributes to the ADP binding site. Residue Gly238 coordinates CDP. An AMP-binding site is contributed by Gly239. Position 239 (Gly239) interacts with ATP. Residues Lys267 and Lys291 each carry the N6-acetyllysine modification. Gly313 contacts AMP. Gly313 lines the ATP pocket. N6-(2-hydroxyisobutyryl)lysine is present on Lys323. CDP-binding residues include Gly338, Val340, and Phe343. Phe343 contributes to the ADP binding site. Glu344 contributes to the AMP binding site. Glu344 contributes to the ATP binding site. Lys361 is subject to N6-acetyllysine. The ATP site is built by Asp375 and Thr376. A Mg(2+)-binding site is contributed by Asp375.

The protein belongs to the phosphoglycerate kinase family. As to quaternary structure, monomer. Interacts with kinase MAPK1/ERK2; the interaction is direct, occurs under hypoxic conditions, and promotes its interaction with PIN1. Interacts with peptidyl-prolyl cis-trans isomerase PIN1; the interaction is direct, occurs under hypoxic conditions, and targets the protein to the mitochondrion by promoting interactions with the TOM complex. Interacts with mitochondrial circRNA mcPGK1 (via its 2nd stem-loop); the interaction is direct and targets the protein to the mitochondrion by promoting interactions with the TOM complex. Interacts with pyruvate dehydrogenase kinase PDK1; the interaction is direct, occurs under hypoxic conditions and leads to PDK1-mediated inhibition of pyruvate dehydrogenase complex activity. Mg(2+) is required as a cofactor. Phosphorylated at Ser-203 by MAPK1/ERK2 under hypoxic conditions, which promotes its mitochondrial targeting. In terms of tissue distribution, testis, lung, brain, skeletal muscle, liver, intestine, and kidney (at protein level).

It localises to the cytoplasm. The protein resides in the cytosol. The protein localises to the mitochondrion matrix. It carries out the reaction (2R)-3-phosphoglycerate + ATP = (2R)-3-phospho-glyceroyl phosphate + ADP. The enzyme catalyses L-seryl-[protein] + ATP = O-phospho-L-seryl-[protein] + ADP + H(+). Its pathway is carbohydrate degradation; glycolysis; pyruvate from D-glyceraldehyde 3-phosphate: step 2/5. In terms of biological role, catalyzes one of the two ATP producing reactions in the glycolytic pathway via the reversible conversion of 1,3-diphosphoglycerate to 3-phosphoglycerate. Both L- and D- forms of purine and pyrimidine nucleotides can be used as substrates, but the activity is much lower on pyrimidines. In addition to its role as a glycolytic enzyme, it seems that PGK-1 acts as a polymerase alpha cofactor protein (primer recognition protein). Acts as a protein kinase when localized to the mitochondrion where it phosphorylates pyruvate dehydrogenase kinase PDK1 to inhibit pyruvate dehydrogenase complex activity and suppress the formation of acetyl-coenzyme A from pyruvate, and consequently inhibit oxidative phosphorylation and promote glycolysis. May play a role in sperm motility. This chain is Phosphoglycerate kinase 1 (Pgk1), found in Mus musculus (Mouse).